We begin with the raw amino-acid sequence, 117 residues long: Ribosome-binding factor A (117 aa).

The protein belongs to the RbfA family. Monomer. Binds 30S ribosomal subunits, but not 50S ribosomal subunits or 70S ribosomes.

The protein resides in the cytoplasm. Its function is as follows. One of several proteins that assist in the late maturation steps of the functional core of the 30S ribosomal subunit. Associates with free 30S ribosomal subunits (but not with 30S subunits that are part of 70S ribosomes or polysomes). Required for efficient processing of 16S rRNA. May interact with the 5'-terminal helix region of 16S rRNA. The polypeptide is Ribosome-binding factor A (Anaplasma marginale (strain St. Maries)).